The following is a 706-amino-acid chain: Polyribonucleotide nucleotidyltransferase (706 aa).

Residues aspartate 490 and aspartate 496 each coordinate Mg(2+). A KH domain is found at 556-615; sequence PRIETMQIPTDKIREVIGSGGKVIREIVEVSGAKVDINDEGIIKIASPNGDSIQKAYDMI. Residues 625–693 form the S1 motif domain; that stretch reads GKIYKGKVVK…DRGKVRLAMK (69 aa).

It belongs to the polyribonucleotide nucleotidyltransferase family. Mg(2+) serves as cofactor.

The protein resides in the cytoplasm. The enzyme catalyses RNA(n+1) + phosphate = RNA(n) + a ribonucleoside 5'-diphosphate. In terms of biological role, involved in mRNA degradation. Catalyzes the phosphorolysis of single-stranded polyribonucleotides processively in the 3'- to 5'-direction. The chain is Polyribonucleotide nucleotidyltransferase from Jannaschia sp. (strain CCS1).